Here is an 80-residue protein sequence, read N- to C-terminus: Putative membrane protein insertion efficiency factor (80 aa).

This sequence belongs to the UPF0161 family.

It is found in the cell inner membrane. Its function is as follows. Could be involved in insertion of integral membrane proteins into the membrane. In Syntrophobacter fumaroxidans (strain DSM 10017 / MPOB), this protein is Putative membrane protein insertion efficiency factor.